A 190-amino-acid chain; its full sequence is dCTP deaminase (190 aa).

107 to 112 contacts dCTP; the sequence is KSTYAR. Glu133 functions as the Proton donor/acceptor in the catalytic mechanism. DCTP is bound by residues Gln152, Tyr166, and Gln176.

This sequence belongs to the dCTP deaminase family. In terms of assembly, homotrimer.

It carries out the reaction dCTP + H2O + H(+) = dUTP + NH4(+). It functions in the pathway pyrimidine metabolism; dUMP biosynthesis; dUMP from dCTP (dUTP route): step 1/2. Catalyzes the deamination of dCTP to dUTP. The protein is dCTP deaminase of Campylobacter hominis (strain ATCC BAA-381 / DSM 21671 / CCUG 45161 / LMG 19568 / NCTC 13146 / CH001A).